A 662-amino-acid polypeptide reads, in one-letter code: Junctophilin-1 (662 aa).

Topologically, residues 1 to 640 (MTGGRFDFDD…EREANSGPNS (640 aa)) are cytoplasmic. MORN repeat units lie at residues 14–36 (YCGGWEEGKAHGHGICTGPKGQG), 38–59 (YSGSWSHGFEVVGGYTWPSGNT), 60–82 (YQGYWAQGKRHGLGVETKGKWMY), 106–128 (YEGTWSNGLQDGYGVETYGDGGT), and 129–151 (YQGQWAGGMRHGYGVRQSVPYGM). Phosphoserine occurs at positions 157, 216, and 220. A disordered region spans residues 228-247 (SKSSISSKRSSVRSDAAMSR). MORN repeat units lie at residues 281-303 (YMGEWKNDKRNGFGISERSNGMK) and 304-326 (YEGEWANNKRHGYGCTVFPDGSK). The span at 432–443 (VDAKENPEEKVP) shows a compositional bias: basic and acidic residues. The disordered stretch occupies residues 432 to 634 (VDAKENPEEK…DSCPSMEREA (203 aa)). T448 is subject to Phosphothreonine. Phosphoserine is present on S452. Residue T461 is modified to Phosphothreonine. Residues S465, S469, and S475 each carry the phosphoserine modification. Positions 584–599 (KPSPNKWSPPKSVTKP) are enriched in low complexity. Basic and acidic residues predominate over residues 600–614 (VAKESKAEPKAKKSE). Residues 641 to 661 (VMIVLVMLLNIGLAILFVHFL) form a helical; Anchor for type IV membrane protein membrane-spanning segment.

Belongs to the junctophilin family.

It localises to the cell membrane. Its subcellular location is the endoplasmic reticulum membrane. The protein resides in the sarcoplasmic reticulum membrane. Functionally, junctophilins contribute to the formation of junctional membrane complexes (JMCs) which link the plasma membrane with the endoplasmic or sarcoplasmic reticulum in excitable cells. Provides a structural foundation for functional cross-talk between the cell surface and intracellular calcium release channels. JPH1 contributes to the construction of the skeletal muscle triad by linking the t-tubule (transverse-tubule) and SR (sarcoplasmic reticulum) membranes. The sequence is that of Junctophilin-1 (JPH1) from Oryctolagus cuniculus (Rabbit).